Reading from the N-terminus, the 631-residue chain is Interferon-induced GTP-binding protein Mx1 (631 aa).

The Dynamin-type G domain occupies 33-306 (DLALPAIAVI…LTSHICKSLP (274 aa)). The G1 motif stretch occupies residues 43–50 (GDQSSGKS). 43 to 50 (GDQSSGKS) provides a ligand contact to GTP. Residues 68–70 (VTR) are G2 motif. Residues 144–147 (DLPG) form a G3 motif region. GTP-binding positions include 144–148 (DLPGI) and 213–216 (TKPD). Residues 213–216 (TKPD) are G4 motif. The G5 motif stretch occupies residues 245-248 (KCRG). A bundle signaling element (BSE) region spans residues 307–332 (LLEDQINSSHQSASEELQKYGADIPE). The segment at 332–499 (EDDRTRMSFL…HFQMEQIVYC (168 aa)) is middle domain. Positions 333 to 601 (DDRTRMSFLV…TSKCSWFLEE (269 aa)) are stalk. The tract at residues 520–522 (KTK) is critical for lipid-binding. Residues 543–631 (TTEMTQHLKA…ARQKLAKFSD (89 aa)) form the GED domain.

Belongs to the TRAFAC class dynamin-like GTPase superfamily. Dynamin/Fzo/YdjA family. Homooligomer. Oligomerizes into multimeric filamentous or ring-like structures by virtue of its stalk domain. Oligomerization is critical for GTPase activity, protein stability, and recognition of viral target structures. Interacts with TRPC1, TRPC3, TRPC4, TRPC5, TRPC6 and TRPC7. Interacts with HSPA5. Interacts with TUBB/TUBB5. Interacts with DDX39A and DDX39B. Post-translationally, ISGylated.

It localises to the cytoplasm. The protein resides in the nucleus. Its subcellular location is the endoplasmic reticulum membrane. The protein localises to the perinuclear region. Its function is as follows. Interferon-induced dynamin-like GTPase with antiviral activity against influenza A virus, (IAV), influenza B virus (IBV) and Thogoto virus (THOV). Inhibits FLUAV by interfering with the process of primary transcription, probably by affecting the viral polymerase function. The sequence is that of Interferon-induced GTP-binding protein Mx1 (Mx1) from Mus musculus (Mouse).